The following is a 66-amino-acid chain: Large ribosomal subunit protein bL35 (66 aa).

It belongs to the bacterial ribosomal protein bL35 family.

This chain is Large ribosomal subunit protein bL35, found in Neorickettsia sennetsu (strain ATCC VR-367 / Miyayama) (Ehrlichia sennetsu).